Consider the following 600-residue polypeptide: Glutamine--fructose-6-phosphate aminotransferase [isomerizing] (600 aa).

The Nucleophile; for GATase activity role is filled by cysteine 2. The region spanning 2–217 is the Glutamine amidotransferase type-2 domain; sequence CGIVGFIGEQ…DKEIVIVTKE (216 aa). SIS domains are found at residues 283 to 422 and 452 to 590; these read IRNA…AKGE and LAKQ…VDKP. Lysine 595 serves as the catalytic For Fru-6P isomerization activity.

In terms of assembly, homodimer.

Its subcellular location is the cytoplasm. It catalyses the reaction D-fructose 6-phosphate + L-glutamine = D-glucosamine 6-phosphate + L-glutamate. In terms of biological role, catalyzes the first step in hexosamine metabolism, converting fructose-6P into glucosamine-6P using glutamine as a nitrogen source. The polypeptide is Glutamine--fructose-6-phosphate aminotransferase [isomerizing] (Bacillus cereus (strain ATCC 14579 / DSM 31 / CCUG 7414 / JCM 2152 / NBRC 15305 / NCIMB 9373 / NCTC 2599 / NRRL B-3711)).